Reading from the N-terminus, the 793-residue chain is Translocase of chloroplast 90, chloroplastic (793 aa).

A disordered region spans residues 22–59 (LGSDPFFRDPHQEQDNHSQAPAAPQPVTLSEPPCSTSS). Residues 27 to 37 (FFRDPHQEQDN) show a composition bias toward basic and acidic residues. The stretch at 130–157 (LIRAEESELKNVKLRQDRAKALAREQES) forms a coiled coil. The AIG1-type G domain occupies 164–394 (DFSLRILVLG…FRDSIGLGQP (231 aa)). The G1 stretch occupies residues 173-180 (GKTGVGKS). Residues 176–181 (GVGKSA) and 195–200 (DAFRPG) contribute to the GTP site. Residue Ser180 participates in Mg(2+) binding. Residues 195–198 (DAFR) form a homodimerization region. A G2 region spans residues 199-203 (PGTDR). The interval 220–223 (DTPG) is G3. The homodimerization stretch occupies residues 259–264 (RLDMID). A helical membrane pass occupies residues 279 to 297 (IFGAAIWLNTILVMTHSAA). Positions 293-296 (THSA) are G4. GTP-binding positions include His294 and 341 to 342 (EN). Residues 341 to 343 (ENH) are G5. 2 coiled-coil regions span residues 410 to 442 (LRRR…YDQL) and 477 to 503 (KKQL…DTEQ).

This sequence belongs to the TRAFAC class TrmE-Era-EngA-EngB-Septin-like GTPase superfamily. AIG1/Toc34/Toc159-like paraseptin GTPase family. TOC159 subfamily. Homodimer. Part of the TOC core complex that includes 1 protein for the specific recognition of transit peptides surrounded by a ring composed of four proteins forming translocation channels, and four to five GTP-binding proteins providing energy. This core complex can interact with components of the TIC complex to form a larger import complex. Chloroplastic protein precursor such as prSS (precursor of the RuBisCO small subunit) interacts with these complexes. The TOC complex contains a specific subset of polar lipids such as digalactosyldiacylglyceride (DGDG), phosphatidylcholine (PC) and phosphatidylglycerol (PG). Interacts with TOC33 and TOC75. It depends on Mg(2+) as a cofactor. In terms of tissue distribution, expressed in seedlings, leaves, flowers, and roots.

The protein resides in the plastid. Its subcellular location is the chloroplast outer membrane. It is found in the cytoplasm. Functionally, GTPase involved in protein precursor import into chloroplasts. Seems to recognize chloroplast-destined precursor proteins and regulate their presentation to the translocation channel through GTP hydrolysis. Probably specialized in the import of nuclear encoded photosynthetic preproteins from the cytoplasm to the chloroplast. This is Translocase of chloroplast 90, chloroplastic (TOC90) from Arabidopsis thaliana (Mouse-ear cress).